The primary structure comprises 360 residues: Peptide chain release factor 1 (360 aa).

The residue at position 235 (glutamine 235) is an N5-methylglutamine.

This sequence belongs to the prokaryotic/mitochondrial release factor family. Methylated by PrmC. Methylation increases the termination efficiency of RF1.

It is found in the cytoplasm. Its function is as follows. Peptide chain release factor 1 directs the termination of translation in response to the peptide chain termination codons UAG and UAA. The polypeptide is Peptide chain release factor 1 (Bordetella pertussis (strain Tohama I / ATCC BAA-589 / NCTC 13251)).